We begin with the raw amino-acid sequence, 356 residues long: Tyrosine recombinase XerS (356 aa).

Residues 16-121 enclose the Core-binding (CB) domain; sequence IMPWYVLDYY…ALSSLYKYLT (106 aa). Positions 169 to 354 constitute a Tyr recombinase domain; it reads AFLDYVDKEY…VNDEQKNALD (186 aa). Active-site residues include Arg210, Lys234, His306, Arg309, and His332. Tyr341 functions as the O-(3'-phospho-DNA)-tyrosine intermediate in the catalytic mechanism.

The protein belongs to the 'phage' integrase family. XerS subfamily.

Its subcellular location is the cytoplasm. With respect to regulation, ftsK is required for recombination. Site-specific tyrosine recombinase, which acts by catalyzing the cutting and rejoining of the recombining DNA molecules. Essential to convert dimers of the bacterial chromosome into monomers to permit their segregation at cell division. In Streptococcus pyogenes serotype M6 (strain ATCC BAA-946 / MGAS10394), this protein is Tyrosine recombinase XerS.